A 595-amino-acid chain; its full sequence is Apolipoprotein N-acyltransferase 2 (595 aa).

A run of 5 helical transmembrane segments spans residues 30 to 50 (FLAFAPVSLTHFVWIAPFGFF), 63 to 83 (LFFHGLLIGVVFYAISFHWII), 95 to 115 (VVAILILLFAGLLFGLKFPIF), 167 to 187 (AEITGVYGISFLVFIVSYTLF), and 210 to 230 (FITLPALLLLTFIVSGIFLFK). Residues 241–555 (LNVLIVQPDA…AEALSETIDV (315 aa)) form the CN hydrolase domain. The active-site Proton acceptor is E293. K372 is an active-site residue. Residue C463 is the Nucleophile of the active site. Residues 569-589 (LIPWLMLFLTGIYYLNLLIGI) form a helical membrane-spanning segment.

This sequence belongs to the CN hydrolase family. Apolipoprotein N-acyltransferase subfamily.

It localises to the cell inner membrane. It catalyses the reaction N-terminal S-1,2-diacyl-sn-glyceryl-L-cysteinyl-[lipoprotein] + a glycerophospholipid = N-acyl-S-1,2-diacyl-sn-glyceryl-L-cysteinyl-[lipoprotein] + a 2-acyl-sn-glycero-3-phospholipid + H(+). The protein operates within protein modification; lipoprotein biosynthesis (N-acyl transfer). Its function is as follows. Catalyzes the phospholipid dependent N-acylation of the N-terminal cysteine of apolipoprotein, the last step in lipoprotein maturation. This Leptospira interrogans serogroup Icterohaemorrhagiae serovar copenhageni (strain Fiocruz L1-130) protein is Apolipoprotein N-acyltransferase 2.